A 117-amino-acid chain; its full sequence is MTRVKRGVVARRRHKKILKQAKGYYGARSRVFRVAKQAVIKAGQYAYRDRRQRKRQFRALWITRINAASRANGLSYSRFIAGLKKSGIEIDRKVLADLAVHEKAAFAAIVDKAKAAQ.

It belongs to the bacterial ribosomal protein bL20 family.

Binds directly to 23S ribosomal RNA and is necessary for the in vitro assembly process of the 50S ribosomal subunit. It is not involved in the protein synthesizing functions of that subunit. This is Large ribosomal subunit protein bL20 from Chromohalobacter salexigens (strain ATCC BAA-138 / DSM 3043 / CIP 106854 / NCIMB 13768 / 1H11).